The sequence spans 295 residues: Phosphatidylserine decarboxylase proenzyme (295 aa).

Catalysis depends on charge relay system; for autoendoproteolytic cleavage activity residues Asp113, His169, and Ser256. The active-site Schiff-base intermediate with substrate; via pyruvic acid; for decarboxylase activity is Ser256. Ser256 carries the post-translational modification Pyruvic acid (Ser); by autocatalysis.

It belongs to the phosphatidylserine decarboxylase family. PSD-B subfamily. Prokaryotic type II sub-subfamily. Heterodimer of a large membrane-associated beta subunit and a small pyruvoyl-containing alpha subunit. The cofactor is pyruvate. In terms of processing, is synthesized initially as an inactive proenzyme. Formation of the active enzyme involves a self-maturation process in which the active site pyruvoyl group is generated from an internal serine residue via an autocatalytic post-translational modification. Two non-identical subunits are generated from the proenzyme in this reaction, and the pyruvate is formed at the N-terminus of the alpha chain, which is derived from the carboxyl end of the proenzyme. The autoendoproteolytic cleavage occurs by a canonical serine protease mechanism, in which the side chain hydroxyl group of the serine supplies its oxygen atom to form the C-terminus of the beta chain, while the remainder of the serine residue undergoes an oxidative deamination to produce ammonia and the pyruvoyl prosthetic group on the alpha chain. During this reaction, the Ser that is part of the protease active site of the proenzyme becomes the pyruvoyl prosthetic group, which constitutes an essential element of the active site of the mature decarboxylase.

Its subcellular location is the cell membrane. It catalyses the reaction a 1,2-diacyl-sn-glycero-3-phospho-L-serine + H(+) = a 1,2-diacyl-sn-glycero-3-phosphoethanolamine + CO2. The protein operates within phospholipid metabolism; phosphatidylethanolamine biosynthesis; phosphatidylethanolamine from CDP-diacylglycerol: step 2/2. Catalyzes the formation of phosphatidylethanolamine (PtdEtn) from phosphatidylserine (PtdSer). The polypeptide is Phosphatidylserine decarboxylase proenzyme (Clostridium botulinum (strain 657 / Type Ba4)).